The sequence spans 163 residues: Phosphopantetheine adenylyltransferase (163 aa).

Serine 11 lines the substrate pocket. Residues 11–12 and histidine 19 each bind ATP; that span reads SF. Lysine 43, leucine 75, and arginine 89 together coordinate substrate. ATP is bound by residues 90–92, glutamate 100, and 125–131; these read GLR and FGYLSSS.

The protein belongs to the bacterial CoaD family. In terms of assembly, homohexamer. It depends on Mg(2+) as a cofactor.

It is found in the cytoplasm. It catalyses the reaction (R)-4'-phosphopantetheine + ATP + H(+) = 3'-dephospho-CoA + diphosphate. The protein operates within cofactor biosynthesis; coenzyme A biosynthesis; CoA from (R)-pantothenate: step 4/5. Functionally, reversibly transfers an adenylyl group from ATP to 4'-phosphopantetheine, yielding dephospho-CoA (dPCoA) and pyrophosphate. The chain is Phosphopantetheine adenylyltransferase from Geobacter metallireducens (strain ATCC 53774 / DSM 7210 / GS-15).